Consider the following 388-residue polypeptide: Arginine biosynthesis bifunctional protein ArgJ (388 aa).

Substrate-binding residues include Thr150, Lys172, Thr183, Glu263, Asn383, and Ser388. Thr183 serves as the catalytic Nucleophile.

Belongs to the ArgJ family. In terms of assembly, heterotetramer of two alpha and two beta chains.

The protein resides in the cytoplasm. It carries out the reaction N(2)-acetyl-L-ornithine + L-glutamate = N-acetyl-L-glutamate + L-ornithine. The enzyme catalyses L-glutamate + acetyl-CoA = N-acetyl-L-glutamate + CoA + H(+). Its pathway is amino-acid biosynthesis; L-arginine biosynthesis; L-ornithine and N-acetyl-L-glutamate from L-glutamate and N(2)-acetyl-L-ornithine (cyclic): step 1/1. It participates in amino-acid biosynthesis; L-arginine biosynthesis; N(2)-acetyl-L-ornithine from L-glutamate: step 1/4. Catalyzes two activities which are involved in the cyclic version of arginine biosynthesis: the synthesis of N-acetylglutamate from glutamate and acetyl-CoA as the acetyl donor, and of ornithine by transacetylation between N(2)-acetylornithine and glutamate. The protein is Arginine biosynthesis bifunctional protein ArgJ of Corynebacterium glutamicum (strain ATCC 13032 / DSM 20300 / JCM 1318 / BCRC 11384 / CCUG 27702 / LMG 3730 / NBRC 12168 / NCIMB 10025 / NRRL B-2784 / 534).